Here is a 242-residue protein sequence, read N- to C-terminus: Hairy and enhancer of split-related protein HELT (242 aa).

The bHLH domain maps to 10-65 (RTPVSHKVIEKRRRDRINRCLNELGKTVPMALAKQSSGKLEKAEILEMTVQYLRAL). Lys48 bears the N6-acetyllysine mark. An Orange domain is found at 87–122 (FHYGYHECMKNLVHYLTTVERMETKDTKYARILAFL).

This sequence belongs to the HEY family. In terms of assembly, self-associates. Interacts with HES5 and HEY2.

It is found in the nucleus. Its function is as follows. Transcriptional repressor which binds preferentially to the canonical E box sequence 5'-CACGCG-3'. The sequence is that of Hairy and enhancer of split-related protein HELT (HELT) from Homo sapiens (Human).